A 764-amino-acid chain; its full sequence is DNA replication regulator DPB11 (764 aa).

3 BRCT domains span residues 1–99 (MKPF…MTGS), 129–220 (TNIT…PYYL), and 322–418 (NSTL…DLWS). 2 disordered regions span residues 651-675 (ETDSGRKKRSVSSSIMDVSSERQMP) and 710-764 (TEQP…ELDS). The segment covering 739 to 751 (QDKKRTASLEKPM) has biased composition (basic and acidic residues).

In terms of assembly, interacts with SLD2.

The protein localises to the nucleus. Has a role in the initiation of DNA replication. Required at S-phase checkpoint. Required for the association of PSF1 with origins. Also required for the proper activation of RAD53 in response to DNA damage and replication blocks. Multicopy suppressor of DPB2 mutation. Overexpression restores the growth defect conferred by POL2 mutation. This Saccharomyces cerevisiae (strain ATCC 204508 / S288c) (Baker's yeast) protein is DNA replication regulator DPB11 (DPB11).